The following is a 239-amino-acid chain: Splicing factor U2AF 35 kDa subunit (239 aa).

N-acetylalanine is present on A2. A C3H1-type 1 zinc finger spans residues 12–40; the sequence is EKDKVNCSFYFKIGACRHGDRCSRLHNKP. K39 is modified (N6-methyllysine). 2 positions are modified to phosphoserine: S61 and S145. The RRM domain occupies 65–147; that stretch reads LRCAVSDVEM…QPIHAELSPV (83 aa). Residues 149 to 176 form a C3H1-type 2 zinc finger; it reads DFREACCRQYEMGECTRGGFCNFMHLKP. An Omega-N-methylarginine modification is found at R165. The tract at residues 183–239 is disordered; that stretch reads RELYGRRRKKHRSRSRSRERRSRSRDRGRGGGGGGGGGGGRERDRRRSRDRERSGRF. A compositionally biased stretch (basic residues) spans 188-208; the sequence is RRRKKHRSRSRSRERRSRSRD. Residues 212-221 are compositionally biased toward gly residues; that stretch reads GGGGGGGGGG. The span at 222–239 shows a compositional bias: basic and acidic residues; that stretch reads GRERDRRRSRDRERSGRF.

It belongs to the splicing factor SR family. Identified in the spliceosome C complex. Heterodimer with U2AF2. Interacts (via RS domain) with PHF5A (via N-terminus). Interacts with ZRANB2. Interacts with SDE2. Interacts with SF3B1. Expressed in primary spermatocytes and elongating spermatids (at protein level).

It localises to the nucleus. The protein localises to the nucleus speckle. Functionally, plays a critical role in both constitutive and enhancer-dependent splicing by mediating protein-protein interactions and protein-RNA interactions required for accurate 3'-splice site selection. Recruits U2 snRNP to the branch point. Directly mediates interactions between U2AF2 and proteins bound to the enhancers and thus may function as a bridge between U2AF2 and the enhancer complex to recruit it to the adjacent intron. This is Splicing factor U2AF 35 kDa subunit (U2af1) from Mus musculus (Mouse).